We begin with the raw amino-acid sequence, 140 residues long: MERTLTILKPDCVRKQLIGAVTDKIERAGFRIVAMKKTRLTKETAGAFYAVHKERPFYGELVEFMSSGPCVPMILEKENAVADFRTLIGATDPAEAAEGTVRKLYADSKGENIVHGSDSAENAAIEGAFFFAAEEVVRVD.

ATP-binding residues include Lys-9, Phe-57, Arg-85, Thr-91, Arg-102, and Asn-112. The active-site Pros-phosphohistidine intermediate is the His-115.

Belongs to the NDK family. In terms of assembly, homotetramer. Requires Mg(2+) as cofactor.

It is found in the cytoplasm. It carries out the reaction a 2'-deoxyribonucleoside 5'-diphosphate + ATP = a 2'-deoxyribonucleoside 5'-triphosphate + ADP. The enzyme catalyses a ribonucleoside 5'-diphosphate + ATP = a ribonucleoside 5'-triphosphate + ADP. In terms of biological role, major role in the synthesis of nucleoside triphosphates other than ATP. The ATP gamma phosphate is transferred to the NDP beta phosphate via a ping-pong mechanism, using a phosphorylated active-site intermediate. The sequence is that of Nucleoside diphosphate kinase from Chlorobaculum parvum (strain DSM 263 / NCIMB 8327) (Chlorobium vibrioforme subsp. thiosulfatophilum).